The following is a 184-amino-acid chain: ATP synthase subunit b, chloroplastic (184 aa).

Residues 27 to 49 (FATNPINLSVVLGVLIFFGKGVL) traverse the membrane as a helical segment.

Belongs to the ATPase B chain family. In terms of assembly, F-type ATPases have 2 components, F(1) - the catalytic core - and F(0) - the membrane proton channel. F(1) has five subunits: alpha(3), beta(3), gamma(1), delta(1), epsilon(1). F(0) has four main subunits: a(1), b(1), b'(1) and c(10-14). The alpha and beta chains form an alternating ring which encloses part of the gamma chain. F(1) is attached to F(0) by a central stalk formed by the gamma and epsilon chains, while a peripheral stalk is formed by the delta, b and b' chains.

The protein localises to the plastid. It is found in the chloroplast thylakoid membrane. Functionally, f(1)F(0) ATP synthase produces ATP from ADP in the presence of a proton or sodium gradient. F-type ATPases consist of two structural domains, F(1) containing the extramembraneous catalytic core and F(0) containing the membrane proton channel, linked together by a central stalk and a peripheral stalk. During catalysis, ATP synthesis in the catalytic domain of F(1) is coupled via a rotary mechanism of the central stalk subunits to proton translocation. In terms of biological role, component of the F(0) channel, it forms part of the peripheral stalk, linking F(1) to F(0). The protein is ATP synthase subunit b, chloroplastic of Ipomoea purpurea (Common morning glory).